Consider the following 240-residue polypeptide: Ribonuclease PH (240 aa).

Residues Arg-86 and 124–126 (GTR) each bind phosphate.

This sequence belongs to the RNase PH family. Homohexameric ring arranged as a trimer of dimers.

The catalysed reaction is tRNA(n+1) + phosphate = tRNA(n) + a ribonucleoside 5'-diphosphate. Phosphorolytic 3'-5' exoribonuclease that plays an important role in tRNA 3'-end maturation. Removes nucleotide residues following the 3'-CCA terminus of tRNAs; can also add nucleotides to the ends of RNA molecules by using nucleoside diphosphates as substrates, but this may not be physiologically important. Probably plays a role in initiation of 16S rRNA degradation (leading to ribosome degradation) during starvation. In Mannheimia succiniciproducens (strain KCTC 0769BP / MBEL55E), this protein is Ribonuclease PH.